The sequence spans 740 residues: Ion-translocating oxidoreductase complex subunit C (740 aa).

4Fe-4S ferredoxin-type domains lie at glycine 369–tyrosine 397 and lysine 407–phenylalanine 436. The [4Fe-4S] cluster site is built by cysteine 377, cysteine 380, cysteine 383, cysteine 387, cysteine 416, cysteine 419, cysteine 422, and cysteine 426. The interval lysine 602 to lysine 716 is disordered.

Belongs to the 4Fe4S bacterial-type ferredoxin family. RnfC subfamily. The complex is composed of six subunits: RsxA, RsxB, RsxC, RsxD, RsxE and RsxG. Requires [4Fe-4S] cluster as cofactor.

The protein localises to the cell inner membrane. Part of a membrane-bound complex that couples electron transfer with translocation of ions across the membrane. Required to maintain the reduced state of SoxR. This chain is Ion-translocating oxidoreductase complex subunit C, found in Escherichia coli O139:H28 (strain E24377A / ETEC).